A 294-amino-acid polypeptide reads, in one-letter code: ATP synthase gamma chain (294 aa).

The protein belongs to the ATPase gamma chain family. In terms of assembly, F-type ATPases have 2 components, CF(1) - the catalytic core - and CF(0) - the membrane proton channel. CF(1) has five subunits: alpha(3), beta(3), gamma(1), delta(1), epsilon(1). CF(0) has three main subunits: a, b and c.

The protein localises to the cell inner membrane. Functionally, produces ATP from ADP in the presence of a proton gradient across the membrane. The gamma chain is believed to be important in regulating ATPase activity and the flow of protons through the CF(0) complex. The polypeptide is ATP synthase gamma chain (Campylobacter lari (strain RM2100 / D67 / ATCC BAA-1060)).